The chain runs to 2104 residues: Phenolphthiocerol synthesis polyketide synthase type I Pks15/1 (2104 aa).

The region spanning 41–464 (TEPVAVVGIG…GTNAHVILEE (424 aa)) is the Ketosynthase family 3 (KS3) domain. Active-site for beta-ketoacyl synthase activity residues include Cys-211, His-346, and His-386. The interval 571 to 887 (TAVVFPGQGS…GQLFSTGMSV (317 aa)) is acyltransferase. Ser-662 functions as the For acyltransferase activity in the catalytic mechanism. Residues 935-1057 (HALLGAVVER…GMLGVEAASS (123 aa)) form an N-terminal hotdog fold region. Positions 935 to 1095 (HALLGAVVER…YAYGPGFQGL (161 aa)) are dehydratase. One can recognise a PKS/mFAS DH domain in the interval 935–1207 (HALLGAVVER…TRAMSAAQLR (273 aa)). Catalysis depends on His-967, which acts as the Proton acceptor; for dehydratase activity. A C-terminal hotdog fold region spans residues 1069-1207 (AESVDISDGY…TRAMSAAQLR (139 aa)). Catalysis depends on Asp-1128, which acts as the Proton donor; for dehydratase activity. The enoylreductase stretch occupies residues 1400-1705 (GTLEDLVIEP…QARHIGKVVL (306 aa)). Residues 1530–1547 (VLIH…VQLA) and 1719–1734 (TVLI…AVLA) contribute to the NADP(+) site. The beta-ketoacyl reductase (KR) stretch occupies residues 1718–1899 (ATVLITGATG…SVAWGLWEQS (182 aa)). Residues 2004 to 2079 (DALVGLVCLQ…AIAEYVGRQI (76 aa)) enclose the Carrier domain. The residue at position 2039 (Ser-2039) is an O-(pantetheine 4'-phosphoryl)serine. The tract at residues 2081–2104 (DSQATQAEEEKLPESDGEMVSVTA) is disordered.

It belongs to the thiolase-like superfamily. Beta-ketoacyl-ACP synthases family. It depends on pantetheine 4'-phosphate as a cofactor.

It catalyses the reaction a fatty acyl-[ACP] + malonyl-[ACP] + H(+) = a 3-oxoacyl-[ACP] + holo-[ACP] + CO2. It functions in the pathway lipid metabolism; fatty acid biosynthesis. Catalyzes the elongation by iterative transfer of p-hydroxybenzoyl group from FadD22 (pHBA-S-FAdD22) to form p-hydroxyphenylalkanoate (pHPA) intermediates during phenolphthiocerol (PPOL) biosynthesis. PPOL is an important intermediate in the biosynthesis of phenolic glycolipid (mycosid B). The sequence is that of Phenolphthiocerol synthesis polyketide synthase type I Pks15/1 (pks15/1) from Mycobacterium marinum (strain ATCC BAA-535 / M).